A 339-amino-acid chain; its full sequence is Ketol-acid reductoisomerase (NADP(+)) (339 aa).

Residues Met1–Thr182 form the KARI N-terminal Rossmann domain. Residues Tyr24–Gln27, Arg48, Ser51, Thr53, and Asp83–Gln86 each bind NADP(+). His108 is an active-site residue. Gly134 is a binding site for NADP(+). Positions Thr183–Ile328 constitute a KARI C-terminal knotted domain. Asp191, Glu195, Glu227, and Glu231 together coordinate Mg(2+). Ser252 provides a ligand contact to substrate.

The protein belongs to the ketol-acid reductoisomerase family. The cofactor is Mg(2+).

The enzyme catalyses (2R)-2,3-dihydroxy-3-methylbutanoate + NADP(+) = (2S)-2-acetolactate + NADPH + H(+). The catalysed reaction is (2R,3R)-2,3-dihydroxy-3-methylpentanoate + NADP(+) = (S)-2-ethyl-2-hydroxy-3-oxobutanoate + NADPH + H(+). It functions in the pathway amino-acid biosynthesis; L-isoleucine biosynthesis; L-isoleucine from 2-oxobutanoate: step 2/4. The protein operates within amino-acid biosynthesis; L-valine biosynthesis; L-valine from pyruvate: step 2/4. Functionally, involved in the biosynthesis of branched-chain amino acids (BCAA). Catalyzes an alkyl-migration followed by a ketol-acid reduction of (S)-2-acetolactate (S2AL) to yield (R)-2,3-dihydroxy-isovalerate. In the isomerase reaction, S2AL is rearranged via a Mg-dependent methyl migration to produce 3-hydroxy-3-methyl-2-ketobutyrate (HMKB). In the reductase reaction, this 2-ketoacid undergoes a metal-dependent reduction by NADPH to yield (R)-2,3-dihydroxy-isovalerate. The chain is Ketol-acid reductoisomerase (NADP(+)) from Rhodopseudomonas palustris (strain BisA53).